The following is a 31-amino-acid chain: Cyclotide cter-C (31 aa).

The cyclopeptide (Gly-Asp) cross-link spans 1–31; it reads GVPCAESCVWIPCTVTALLGCSCKDKVCYLD. 3 disulfide bridges follow: Cys-4-Cys-21, Cys-8-Cys-23, and Cys-13-Cys-28.

Post-translationally, contains 3 disulfide bonds. In terms of processing, this is a cyclic peptide.

In terms of biological role, probably participates in a plant defense mechanism. This chain is Cyclotide cter-C, found in Clitoria ternatea (Butterfly pea).